The sequence spans 132 residues: Holo-[acyl-carrier-protein] synthase (132 aa).

2 residues coordinate Mg(2+): Asp13 and Glu63.

Belongs to the P-Pant transferase superfamily. AcpS family. Mg(2+) serves as cofactor.

It localises to the cytoplasm. The catalysed reaction is apo-[ACP] + CoA = holo-[ACP] + adenosine 3',5'-bisphosphate + H(+). Its function is as follows. Transfers the 4'-phosphopantetheine moiety from coenzyme A to a Ser of acyl-carrier-protein. The sequence is that of Holo-[acyl-carrier-protein] synthase from Gloeobacter violaceus (strain ATCC 29082 / PCC 7421).